Consider the following 297-residue polypeptide: Glycine--tRNA ligase alpha subunit (297 aa).

It belongs to the class-II aminoacyl-tRNA synthetase family. In terms of assembly, tetramer of two alpha and two beta subunits.

It is found in the cytoplasm. The enzyme catalyses tRNA(Gly) + glycine + ATP = glycyl-tRNA(Gly) + AMP + diphosphate. The polypeptide is Glycine--tRNA ligase alpha subunit (Sulfurihydrogenibium sp. (strain YO3AOP1)).